Reading from the N-terminus, the 398-residue chain is Acetate kinase (398 aa).

Asn-9 provides a ligand contact to Mg(2+). Position 16 (Lys-16) interacts with ATP. Residue Arg-93 coordinates substrate. Residue Asp-150 is the Proton donor/acceptor of the active site. Residues 209 to 213 (HLGAG), 284 to 286 (DMR), and 329 to 333 (GIGEH) each bind ATP. Position 382 (Glu-382) interacts with Mg(2+).

It belongs to the acetokinase family. As to quaternary structure, homodimer. Requires Mg(2+) as cofactor. The cofactor is Mn(2+).

It localises to the cytoplasm. It carries out the reaction acetate + ATP = acetyl phosphate + ADP. The protein operates within metabolic intermediate biosynthesis; acetyl-CoA biosynthesis; acetyl-CoA from acetate: step 1/2. Catalyzes the formation of acetyl phosphate from acetate and ATP. Can also catalyze the reverse reaction. This chain is Acetate kinase, found in Rhodopseudomonas palustris (strain ATCC BAA-98 / CGA009).